We begin with the raw amino-acid sequence, 189 residues long: Ribulose bisphosphate carboxylase small subunit, chloroplastic (189 aa).

The transit peptide at 1-66 (MASSIMALSS…KTTSNGSRVR (66 aa)) directs the protein to the chloroplast.

Belongs to the RuBisCO small chain family. Heterohexadecamer of 8 large and 8 small subunits.

Its subcellular location is the plastid. The protein localises to the chloroplast. Its function is as follows. RuBisCO catalyzes two reactions: the carboxylation of D-ribulose 1,5-bisphosphate, the primary event in carbon dioxide fixation, as well as the oxidative fragmentation of the pentose substrate. Both reactions occur simultaneously and in competition at the same active site. Although the small subunit is not catalytic it is essential for maximal activity. This Larix laricina (Tamarack) protein is Ribulose bisphosphate carboxylase small subunit, chloroplastic.